The chain runs to 338 residues: CRISPR system Cmr subunit Cmr1-1 (338 aa).

This sequence belongs to the CRISPR system Cmr1 family. As to quaternary structure, part of the type III-B Cmr ribonucleoprotein (RNP) complex, an elongated RNP with Cmr2 and Cmr3 as the base, with Cmr4 and Cmr5 forming a helical core along the mature crRNA (39 or 45 nt in length), while the complex is capped by Cmr6 and Cmr1. The 5' end of the crRNA is bound to Cmr2 and Cmr3, while Cmr6 and a Cmr1 subunit (Cmr1-1 or Cmr1-2) cap the 3' end of the crRNA. The target RNA lies antiparallel to the crRNA, with its 5' end near Cmr1 and Cmr6 and its 3' end near Cmr2 and Cmr3; major target cleavage occurs nears the junction of Cmr1/Cmr6 and Cmr4/Cmr, with minor cleavage occurring at 6 nt intervals which coincide with the proposed spacing of Cmr4 subunits.

The protein localises to the cytoplasm. In terms of biological role, CRISPR (clustered regularly interspaced short palindromic repeat), is an adaptive immune system that provides protection against mobile genetic elements (viruses, transposable elements and conjugative plasmids). CRISPR clusters contain sequences complementary to antecedent mobile elements and target invading nucleic acids. CRISPR clusters are transcribed and processed into CRISPR RNA (crRNA), formerly called psiRNA (prokaryotic silencing) in this organism. Part of the Cmr ribonucleoprotein complex which has divalent cation-dependent endoribonuclease activity specific for ssRNA complementary to the crRNA (target RNA), generating 5' hydroxy- and 3' phosphate or 2'-3' cyclic phosphate termini. Cmr4 is probably the subunit that cleaves target RNA. Cmr complex does not cleave ssDNA complementary to the crRNA. Cleavage of invading RNA is guided by the crRNA; substrate cleavage occurs a fixed distance (14 nt) from the 3' end of the crRNA. In vitro reconstitution shows Cmr1-2 and Cmr5 are not absolutely necessary for target cleavage. The sequence is that of CRISPR system Cmr subunit Cmr1-1 from Pyrococcus furiosus (strain ATCC 43587 / DSM 3638 / JCM 8422 / Vc1).